The primary structure comprises 453 residues: Phosphoglucosamine mutase (453 aa).

The active-site Phosphoserine intermediate is Ser100. Mg(2+) is bound by residues Ser100, Asp239, Asp241, and Asp243. Phosphoserine is present on Ser100.

This sequence belongs to the phosphohexose mutase family. The cofactor is Mg(2+). Activated by phosphorylation.

The catalysed reaction is alpha-D-glucosamine 1-phosphate = D-glucosamine 6-phosphate. Functionally, catalyzes the conversion of glucosamine-6-phosphate to glucosamine-1-phosphate. The sequence is that of Phosphoglucosamine mutase from Buchnera aphidicola subsp. Baizongia pistaciae (strain Bp).